We begin with the raw amino-acid sequence, 394 residues long: NAD(P)H-quinone oxidoreductase subunit H (394 aa).

Belongs to the complex I 49 kDa subunit family. NDH-1 can be composed of about 15 different subunits; different subcomplexes with different compositions have been identified which probably have different functions.

It is found in the cellular thylakoid membrane. The catalysed reaction is a plastoquinone + NADH + (n+1) H(+)(in) = a plastoquinol + NAD(+) + n H(+)(out). It carries out the reaction a plastoquinone + NADPH + (n+1) H(+)(in) = a plastoquinol + NADP(+) + n H(+)(out). Functionally, NDH-1 shuttles electrons from an unknown electron donor, via FMN and iron-sulfur (Fe-S) centers, to quinones in the respiratory and/or the photosynthetic chain. The immediate electron acceptor for the enzyme in this species is believed to be plastoquinone. Couples the redox reaction to proton translocation, and thus conserves the redox energy in a proton gradient. Cyanobacterial NDH-1 also plays a role in inorganic carbon-concentration. The protein is NAD(P)H-quinone oxidoreductase subunit H of Trichormus variabilis (strain ATCC 29413 / PCC 7937) (Anabaena variabilis).